We begin with the raw amino-acid sequence, 25 residues long: Soybean toxin 27 kDa chain (25 aa).

Heterodimer of a 27 kDa subunit and a 17 kDa subunit; disulfide-linked. SBTX is known to be glycosylated but it is not known which one of its two subunits is modified; contains 5% carbohydrates. Expressed in seeds, leaves, roots and stem (at protein level).

Its function is as follows. Involved in plant defense. Inhibits spore germination in C.sojina, A.niger (at concentrations &gt;50 ug/ml) and P.herguei but not in F.oxysporum and F.solani. Does not inhibit vegetative mycelial growth. Inhibits growth of C.albicans and K.marxiannus but not P.membranifaciens or C.parapsilosis. Probably acts by affecting the cell membrane. Does not have urease, chitinase, beta-1,3-glucanase or hemagglutination activities. Does not inhibit trypsin. Injection into mice produces toxic effects such as dyspnea, tonic-clonic convulsion and death. The chain is Soybean toxin 27 kDa chain from Glycine max (Soybean).